A 769-amino-acid chain; its full sequence is Phenylalanine--tRNA ligase beta subunit (769 aa).

The region spanning 40-141 (GKLLTIARVA…GEPIPGCEPD (102 aa)) is the tRNA-binding domain. A B5 domain is found at 389–467 (PAPPPIELPL…RMIGYDSIAP (79 aa)). Mg(2+) is bound by residues aspartate 445, aspartate 451, glutamate 454, and glutamate 455. Residues 676–768 (RRYPSSAFDL…GMRAKGYELR (93 aa)) enclose the FDX-ACB domain.

This sequence belongs to the phenylalanyl-tRNA synthetase beta subunit family. Type 1 subfamily. As to quaternary structure, tetramer of two alpha and two beta subunits. Mg(2+) is required as a cofactor.

It is found in the cytoplasm. The catalysed reaction is tRNA(Phe) + L-phenylalanine + ATP = L-phenylalanyl-tRNA(Phe) + AMP + diphosphate + H(+). The chain is Phenylalanine--tRNA ligase beta subunit from Solibacter usitatus (strain Ellin6076).